Reading from the N-terminus, the 739-residue chain is Pre-mRNA-splicing factor ATP-dependent RNA helicase ddx-15 (739 aa).

Over residues 1–19 the composition is skewed to basic and acidic residues; it reads MSSRHRLDLDGSGRGDRRR. The segment at 1–49 is disordered; the sequence is MSSRHRLDLDGSGRGDRRRSPNRRSRSRSRSPHRRSSPDRKRQIGAVGN. Over residues 20–35 the composition is skewed to basic residues; sequence SPNRRSRSRSRSPHRR. The Helicase ATP-binding domain maps to 86-257; that stretch reads MELLRNNQCI…FEDCPLLSVP (172 aa). 99 to 106 lines the ATP pocket; sequence GETGSGKT. A DEAH box motif is present at residues 204 to 207; that stretch reads DEAH. A Helicase C-terminal domain is found at 282–462; the sequence is TVIQIHMVEE…SVVLQLKKLG (181 aa).

It belongs to the DEAD box helicase family. DEAH subfamily. DDX15/PRP43 sub-subfamily.

It is found in the nucleus. It catalyses the reaction ATP + H2O = ADP + phosphate + H(+). In terms of biological role, pre-mRNA processing factor involved in disassembly of spliceosomes after the release of mature mRNA. This Caenorhabditis elegans protein is Pre-mRNA-splicing factor ATP-dependent RNA helicase ddx-15.